A 205-amino-acid chain; its full sequence is GTP cyclohydrolase-2 (205 aa).

49–53 lines the GTP pocket; it reads RLHSE. Residues Cys-54, Cys-65, and Cys-67 each contribute to the Zn(2+) site. GTP-binding positions include Gln-70, 92–94, and Thr-114; that span reads EGR. The active-site Proton acceptor is the Asp-126. The Nucleophile role is filled by Arg-128. Residues Thr-149 and Lys-154 each coordinate GTP.

Belongs to the GTP cyclohydrolase II family. Zn(2+) serves as cofactor.

The catalysed reaction is GTP + 4 H2O = 2,5-diamino-6-hydroxy-4-(5-phosphoribosylamino)-pyrimidine + formate + 2 phosphate + 3 H(+). It participates in cofactor biosynthesis; riboflavin biosynthesis; 5-amino-6-(D-ribitylamino)uracil from GTP: step 1/4. In terms of biological role, catalyzes the conversion of GTP to 2,5-diamino-6-ribosylamino-4(3H)-pyrimidinone 5'-phosphate (DARP), formate and pyrophosphate. This is GTP cyclohydrolase-2 from Pseudomonas putida (strain W619).